We begin with the raw amino-acid sequence, 183 residues long: Adenylate kinase (183 aa).

7–15 (GVAGVGKTT) contributes to the ATP binding site.

It belongs to the archaeal adenylate kinase family.

The protein resides in the cytoplasm. It carries out the reaction AMP + ATP = 2 ADP. The polypeptide is Adenylate kinase (adkA) (Thermoplasma acidophilum (strain ATCC 25905 / DSM 1728 / JCM 9062 / NBRC 15155 / AMRC-C165)).